The sequence spans 132 residues: L-ectoine synthase (132 aa).

It belongs to the ectoine synthase family.

It catalyses the reaction (2S)-4-acetamido-2-aminobutanoate = L-ectoine + H2O. It functions in the pathway amine and polyamine biosynthesis; ectoine biosynthesis; L-ectoine from L-aspartate 4-semialdehyde: step 3/3. Catalyzes the circularization of gamma-N-acetyl-alpha,gamma-diaminobutyric acid (ADABA) to ectoine (1,4,5,6-tetrahydro-2-methyl-4-pyrimidine carboxylic acid), which is an excellent osmoprotectant. In Streptomyces anulatus (Streptomyces chrysomallus), this protein is L-ectoine synthase (ectC).